A 262-amino-acid chain; its full sequence is LysM and putative peptidoglycan-binding domain-containing protein 3 (262 aa).

The Extracellular portion of the chain corresponds to 1 to 218 (MSGRIPNHGY…PYHGADWSLG (218 aa)). In terms of domain architecture, LysM spans 70-114 (ISRDICEGDTLNSIALQYCCTVADLKRANNFLNEQDFFALRTIKI). A helical transmembrane segment spans residues 219–239 (WWTAVAIMVFVGIITPLFYFL). Residues 240–262 (YYEVLMKVNTSHTLNSIEKSGPS) lie on the Cytoplasmic side of the membrane.

It is found in the cell membrane. Its subcellular location is the golgi apparatus. Its function is as follows. Essential for Golgi structural integrity. This Xenopus tropicalis (Western clawed frog) protein is LysM and putative peptidoglycan-binding domain-containing protein 3 (lysmd3).